A 699-amino-acid chain; its full sequence is Transcription factor MYC2 (699 aa).

The tract at residues 25-60 (PWGAASTPPPPPPPPHHHHQQQQQQVLPPPAAAPAA) is disordered. The tract at residues 93–158 (IDVSTGASLL…AAPDEAVEEE (66 aa)) is JAZ-interaction domain. The segment at 290 to 530 (DISVSKPPPP…EPLNHVEAER (241 aa)) is disordered. A compositionally biased stretch (polar residues) spans 306–321 (HFENGSTSTLTENPSP). 2 stretches are compositionally biased toward low complexity: residues 335 to 349 (PQRQQQQQQSSQAQQ) and 387 to 412 (SSSGRRNPSPAPPAATASLTTAPGSL). 2 stretches are compositionally biased toward polar residues: residues 413 to 449 (FSQHTPTLTAAANDAKSNNQKRSMEATSRASNTNNHP) and 459 to 472 (SFSSAPTTRPSTGT). Residues 478–494 (SESDHSDLEASVREVES) are compositionally biased toward basic and acidic residues. A Nuclear localization signal motif is present at residues 506 to 514 (KRPRKRGRK). A compositionally biased stretch (basic residues) spans 507–516 (RPRKRGRKPA). Residues 517-530 (NGREEPLNHVEAER) show a composition bias toward basic and acidic residues. The basic motif; degenerate stretch occupies residues 520–533 (EEPLNHVEAERQRR). The region spanning 520–569 (EEPLNHVEAERQRREKLNQRFYALRAVVPNVSKMDKASLLGDAISYINEL) is the bHLH domain. The tract at residues 534-569 (EKLNQRFYALRAVVPNVSKMDKASLLGDAISYINEL) is helix-loop-helix motif. The disordered stretch occupies residues 582-611 (TLQSQMESLKKERDARPPAPSGGGGDGGAR).

Belongs to the bHLH protein family. As to quaternary structure, interacts with TIFY3/JAZ1. Highly expressed in spikelets and floral organs.

The protein localises to the nucleus. In terms of biological role, transcriptional activator involved in jasmonate (JA) signaling pathway during spikelet development. Binds to the G2 region G-box (5'-CACGTG-3') of the MADS1 promoter and thus directly regulates the expression of MADS1. Its function in MADS1 activation is abolished by TIFY3/JAZ1 which directly target MYC2 during spikelet development. This Oryza sativa subsp. japonica (Rice) protein is Transcription factor MYC2.